The primary structure comprises 385 residues: Transcription factor-like protein DPB (385 aa).

Disordered stretches follow at residues Met1 to Ile53 and Asp71 to Arg102. Residues Pro22–Val31 are compositionally biased toward polar residues. Positions Ser32–Ile53 are enriched in low complexity. The DNA-binding element occupies Gly101 to Pro184. The DEF box motif lies at Asp150–Pro184. Residues Arg185–Ser234 are a coiled coil. The disordered stretch occupies residues Pro296–Asn385. Positions Pro300 to Thr327 are enriched in polar residues. Residues His336–Gln349 show a composition bias toward low complexity. Positions Glu355–Asp364 are enriched in polar residues.

It belongs to the E2F/DP family. As to quaternary structure, heterodimer with non-phosphorylated E2FC. No interaction with phosphorylated E2FC. Interacts preferentially with E2FC, but also with E2FA and E2FB. Interacts with SKP2A. Targeted for proteasomal degradation by the SCF(SKP2A) E3 ubiquitin ligase complex. In terms of processing, phosphorylated. As to expression, ubiquitous.

It is found in the nucleus. It localises to the cytoplasm. Involved in the regulation of the G1/S transition. Increases the DNA binding activity of E2F proteins after heterodimerization. The complex DPB/E2FC restricts cell division and lateral root initiation and may function as a negative regulator of E2F-regulated genes. The interaction with SKP2A is controlled by auxin. This chain is Transcription factor-like protein DPB (DPB), found in Arabidopsis thaliana (Mouse-ear cress).